A 1333-amino-acid chain; its full sequence is Partitioning defective 3 homolog (1333 aa).

Serine 25 is subject to Phosphoserine. Threonine 91 carries the post-translational modification Phosphothreonine. Positions 143–262 (SSDPALTGLS…VGHADTGLEN (120 aa)) are disordered. Polar residues-rich tracts occupy residues 150–163 (GLST…FSSE) and 171–187 (TRWS…TAGS). Phosphoserine is present on residues serine 156 and serine 174. A compositionally biased stretch (basic and acidic residues) spans 190-203 (TCDRKKDENYRSLP). Residues 207 to 224 (SSWSNQFQRDNARSSLSA) show a composition bias toward polar residues. Residues 271 to 359 (MVKLVQVPND…ARVIWFHVVP (89 aa)) enclose the PDZ 1 domain. Disordered stretches follow at residues 369–388 (LSQR…DSHC) and 397–441 (NAPQ…APPS). Serine 383 is modified (phosphoserine). PDZ domains are found at residues 461-546 (NIQL…LVFR) and 590-677 (EVPL…GMIQ). Tyrosine 489 carries the phosphotyrosine modification. Phosphoserine occurs at positions 692, 695, 715, 728, 806, and 824. 2 interaction with PRKCI and PRKCZ regions span residues 712-932 (RRIS…YDKP) and 712-936 (RRIS…MVDD). Lysine 831 is subject to N6-acetyllysine. Position 834 is a phosphoserine (serine 834). At lysine 848 the chain carries N6-acetyllysine. A phosphoserine mark is found at serine 849 and serine 869. Disordered stretches follow at residues 861 to 884 (TVDD…KKSS), 928 to 1011 (SYDK…AKKG), 1024 to 1071 (KHRK…ERQA), 1110 to 1267 (PQSP…LGGH), and 1283 to 1333 (QEQR…PFYS). Lysine 881 carries the N6-acetyllysine modification. The interaction with FRMD4A stretch occupies residues 931 to 1333 (KPMVDDDDEG…TPEKGRPFYS (403 aa)). Residues 935-949 (DDDDEGMETLEEDTE) are compositionally biased toward acidic residues. The residue at position 958 (serine 958) is a Phosphoserine; by AURKA. Serine 967 and serine 969 each carry phosphoserine. 2 stretches are compositionally biased toward basic and acidic residues: residues 977-1005 (DPEK…EKDK) and 1026-1039 (RKDD…RIKI). The residue at position 1042 (serine 1042) is a Phosphoserine. Positions 1046–1071 (EEDRVRMKEEQERIQAKTREFRERQA) are enriched in basic and acidic residues. The stretch at 1046–1078 (EEDRVRMKEEQERIQAKTREFRERQARERDYAE) forms a coiled coil. The span at 1134 to 1143 (PGDSNRSTPS) shows a compositional bias: polar residues. The span at 1144-1171 (NHDRIQRLRQEFQQAKQDEDVEDRRRTY) shows a compositional bias: basic and acidic residues. Coiled coils occupy residues 1145 to 1168 (HDRI…EDRR), 1195 to 1218 (VQVQ…YSSL), and 1274 to 1295 (MLET…LKKQ). Positions 1176–1199 (SWSSSRPASQSGRHSVSVEVQVQR) are enriched in low complexity. A compositionally biased stretch (polar residues) spans 1215–1236 (YSSLPRQSRKNASSISQDSWEQ). Basic and acidic residues predominate over residues 1283-1292 (QEQRRKEQQL). Residues 1314 to 1323 (SQVARLNRLQ) show a composition bias toward polar residues. Over residues 1324 to 1333 (TPEKGRPFYS) the composition is skewed to basic and acidic residues. Lysine 1327 is subject to N6-acetyllysine.

The protein belongs to the PAR3 family. In terms of assembly, interacts with PRCKI and CDH5. Interacts (via PDZ 3 domain) with PTEN (via C-terminus). Component of a complex whose core is composed of ARHGAP17, AMOT, PALS1, PATJ and PARD3/PAR3. Interacts with LIMK2, AURKA and AURKB. Component of the Par polarity complex, composed of at least phosphorylated PRKCZ, PARD3 and TIAM1. Interacts with ECT2 and FBF1. Interacts (via PDZ 1 domain) with F11R/JAM1, PARD6A and PARD6B. Part of a complex with PARD6A or PARD6B, PRKCI or PRKCZ and CDC42 or RAC1. Directly interacts with TIAM1 and TIAM2. Interacts with SIRT2. Interacts (via coiled-coil domain) with FRMD4A. Found in a complex with PARD3, CYTH1 and FRMD4A. Interacts with SAPCD2. Interacts with PRKCA. As to quaternary structure, interacts with PRKCZ. Post-translationally, acetylated. Deacetylated by SIRT2, thereby inhibiting Schwann cell peripheral myelination. In terms of processing, phosphorylation at Ser-824 by PRKCZ and PRKCI occurs at the most apical tip of epithelial cell-cell contacts during the initial phase of tight junction formation and may promote dissociation of the complex with PARD6. EGF-induced Tyr-1123 phosphorylation mediates dissociation from LIMK2. Phosphorylation by AURKA at Ser-958 is required for the normal establishment of neuronal polarity. Isoform 4 and isoform 5 are phosphorylated during oocyte maturation. In terms of tissue distribution, all isoforms are expressed in heart, while expression in brain is mainly limited to isoform 1, and to isoform 3 to a weaker level.

It localises to the cytoplasm. It is found in the endomembrane system. The protein localises to the cell junction. The protein resides in the tight junction. Its subcellular location is the adherens junction. It localises to the cell cortex. It is found in the cytoskeleton. The protein localises to the cell membrane. Its function is as follows. Adapter protein involved in asymmetrical cell division and cell polarization processes. Seems to play a central role in the formation of epithelial tight junctions. Targets the phosphatase PTEN to cell junctions. Association with PARD6B may prevent the interaction of PARD3 with F11R/JAM1, thereby preventing tight junction assembly. The PARD6-PARD3 complex links GTP-bound Rho small GTPases to atypical protein kinase C proteins. Required for establishment of neuronal polarity and normal axon formation in cultured hippocampal neurons. Involved in Schwann cell peripheral myelination. The protein is Partitioning defective 3 homolog (Pard3) of Mus musculus (Mouse).